We begin with the raw amino-acid sequence, 258 residues long: Neurotrophin-3 (258 aa).

The first 18 residues, 1-18 (MSILFYVIFLAYLRGIQG), serve as a signal peptide directing secretion. The propeptide occupies 19–139 (NNMDQRSLPE…TNRTSPRRKR (121 aa)). The disordered stretch occupies residues 60–85 (QSTLPKAEAPREPEQGEATRSEFQPM). Residues 67–79 (EAPREPEQGEATR) are compositionally biased toward basic and acidic residues. N-linked (GlcNAc...) asparagine glycosylation is present at N131. Disulfide bonds link C153–C218, C196–C247, and C206–C249.

The protein belongs to the NGF-beta family. As to expression, brain and peripheral tissues.

It localises to the secreted. Functionally, seems to promote the survival of visceral and proprioceptive sensory neurons. This Rattus norvegicus (Rat) protein is Neurotrophin-3 (Ntf3).